Reading from the N-terminus, the 188-residue chain is Elongation factor P (188 aa).

The protein belongs to the elongation factor P family.

It localises to the cytoplasm. Its pathway is protein biosynthesis; polypeptide chain elongation. Involved in peptide bond synthesis. Stimulates efficient translation and peptide-bond synthesis on native or reconstituted 70S ribosomes in vitro. Probably functions indirectly by altering the affinity of the ribosome for aminoacyl-tRNA, thus increasing their reactivity as acceptors for peptidyl transferase. This chain is Elongation factor P, found in Chloroherpeton thalassium (strain ATCC 35110 / GB-78).